Consider the following 413-residue polypeptide: Multifunctional CCA protein (413 aa).

ATP contacts are provided by G8 and R11. G8 and R11 together coordinate CTP. Mg(2+) is bound by residues D21 and D23. ATP-binding residues include R91, R137, and R140. Residues R91, R137, and R140 each coordinate CTP. The HD domain occupies 225–326 (TGVHVMMVID…ANLLQGVDAY (102 aa)).

The protein belongs to the tRNA nucleotidyltransferase/poly(A) polymerase family. Bacterial CCA-adding enzyme type 1 subfamily. Monomer. Can also form homodimers and oligomers. It depends on Mg(2+) as a cofactor. Ni(2+) serves as cofactor.

The catalysed reaction is a tRNA precursor + 2 CTP + ATP = a tRNA with a 3' CCA end + 3 diphosphate. It catalyses the reaction a tRNA with a 3' CCA end + 2 CTP + ATP = a tRNA with a 3' CCACCA end + 3 diphosphate. Its function is as follows. Catalyzes the addition and repair of the essential 3'-terminal CCA sequence in tRNAs without using a nucleic acid template. Adds these three nucleotides in the order of C, C, and A to the tRNA nucleotide-73, using CTP and ATP as substrates and producing inorganic pyrophosphate. tRNA 3'-terminal CCA addition is required both for tRNA processing and repair. Also involved in tRNA surveillance by mediating tandem CCA addition to generate a CCACCA at the 3' terminus of unstable tRNAs. While stable tRNAs receive only 3'-terminal CCA, unstable tRNAs are marked with CCACCA and rapidly degraded. This Nitrosospira multiformis (strain ATCC 25196 / NCIMB 11849 / C 71) protein is Multifunctional CCA protein.